A 959-amino-acid polypeptide reads, in one-letter code: MSDDKRAKPEKSKYPVNLLDTPFPMRGDLPKREPQWVKQWQDKQLYKKIRAARHGAKKFVLHDGPPYANGDIHIGHAVNKVLKDMIIKARGLTGLDAVYVPGWDCHGMPIEIQIEKQFGKGLPVQEVQSKARAYATEQIARQRKDFERLGVLGDWENPYLTMNFSNEADELRALGKIMERGYVFRGLKPVNWCFDCGSALAEAEVEYKDKVDLSIDVGFPFAETDKIAHAFHVPLAQLEGKPGWIVIWTTTPWTIPSNQALNMHPEVEYALVDTPRGFLILAKDRVEEQLKTYALEGTIVATARGDALTEVRFHHPLAKMDAGYVRTSPVYLGDYVTTDTGTGIVHSAPAYGVEDFQSCKAHGMPDSDIISPVMGDGVYASTLPLFGGLSIWDANPKIVEVLRESGNLFNSHKYEHSYMHCWRHKTPIIYRATSQWFAGMDVDPVDNGPTLRETALAGIEATEFYPAWGKQRLHNMIANRPDWTLSRQRQWGVPMAFFVHKETGALHPRTPELLEEVAKLVEKHGIEAWQTLDPKDLLGDEAAQYEKNRDTLDVWFDSGTTHWTVIRGSHRDELYDPAADLPDGRLADLYLEGSDQHRGWFHSSLLTASMLYGKPPYKALLTHGFTVDGEGRKMSKSVGNTVSPQDISNKMGAEIIRLWVASTDYSGELSISDEILKRVVEGYRRIRNTLRFLLANLTDYDHAKHALPASEWLEIDRYAVALTDRLQKEVLSHYQAYEFHPVVAKLQTFCSEDLGGFYLDVLKDRLYTTAADSKARRGAQNALYHITQAMLHWMAPFLTFTAEEAWQIFAHGTEHKDTIFTSTYYAIPSVDDGDTLLQKWHEIRTVRAEVTRQLEAVRVEGDIGSSLQAEVTIAAGGPVLAALQSLEDDLRFVLLTSAAKVTPAPEGGDLLVTVTPSQHAKCERCWHYRADVGHNPEHPTICGRCDSNLFGAGEHRSHA.

Positions 66–76 (PYANGDIHIGH) match the 'HIGH' region motif. Glu-592 is a binding site for L-isoleucyl-5'-AMP. The 'KMSKS' region signature appears at 633–637 (KMSKS). Lys-636 contributes to the ATP binding site. The Zn(2+) site is built by Cys-922, Cys-925, Cys-942, and Cys-945.

Belongs to the class-I aminoacyl-tRNA synthetase family. IleS type 1 subfamily. In terms of assembly, monomer. Zn(2+) is required as a cofactor.

It localises to the cytoplasm. The catalysed reaction is tRNA(Ile) + L-isoleucine + ATP = L-isoleucyl-tRNA(Ile) + AMP + diphosphate. Functionally, catalyzes the attachment of isoleucine to tRNA(Ile). As IleRS can inadvertently accommodate and process structurally similar amino acids such as valine, to avoid such errors it has two additional distinct tRNA(Ile)-dependent editing activities. One activity is designated as 'pretransfer' editing and involves the hydrolysis of activated Val-AMP. The other activity is designated 'posttransfer' editing and involves deacylation of mischarged Val-tRNA(Ile). In Cupriavidus metallidurans (strain ATCC 43123 / DSM 2839 / NBRC 102507 / CH34) (Ralstonia metallidurans), this protein is Isoleucine--tRNA ligase.